We begin with the raw amino-acid sequence, 147 residues long: Ubiquitin-conjugating enzyme E2 D2 (147 aa).

In terms of domain architecture, UBC core spans 1–147 (MALKRIHKEL…AREWTQKYAM (147 aa)). Cys-85 functions as the Glycyl thioester intermediate in the catalytic mechanism.

This sequence belongs to the ubiquitin-conjugating enzyme family. In terms of assembly, interacts with SCF (SKP1-CUL1-F-box protein) E3 ubiquitin ligase complex. Interacts with CNOT4 (via RING domain). Interacts with E3 ubiquitin-protein ligases CBLC, PJA1 and PJA2. Interacts with PDZRN3. Interacts with PPP1R11. Interacts with E3 ubiquitin-protein ligase PHF7; the interaction inhibits cleavage of PHF7 and promotes association of the complex with the nucleosome core particle.

The enzyme catalyses S-ubiquitinyl-[E1 ubiquitin-activating enzyme]-L-cysteine + [E2 ubiquitin-conjugating enzyme]-L-cysteine = [E1 ubiquitin-activating enzyme]-L-cysteine + S-ubiquitinyl-[E2 ubiquitin-conjugating enzyme]-L-cysteine.. It catalyses the reaction S-ubiquitinyl-[E1 ubiquitin-activating enzyme]-L-cysteine + [acceptor protein]-L-lysine = [E1 ubiquitin-activating enzyme]-L-cysteine + N(6)-monoubiquitinyl-[acceptor protein]-L-lysine.. The protein operates within protein modification; protein ubiquitination. In terms of biological role, accepts ubiquitin from the E1 complex and catalyzes its covalent attachment to other proteins. In vitro catalyzes 'Lys-48'-linked polyubiquitination. Mediates the selective degradation of short-lived and abnormal proteins. Functions in the E6/E6-AP-induced ubiquitination of p53/TP53. Mediates ubiquitination of PEX5 and SQSTM1 and autoubiquitination of STUB1 and TRAF6. Involved in the signal-induced conjugation and subsequent degradation of NFKBIA, FBXW2-mediated GCM1 ubiquitination and degradation, MDM2-dependent degradation of p53/TP53 and the activation of MAVS in the mitochondria by RIGI in response to viral infection. Essential for viral activation of IRF3. This is Ubiquitin-conjugating enzyme E2 D2 (UBE2D2) from Bos taurus (Bovine).